The chain runs to 1331 residues: ABC multidrug transporter MDR2 (1331 aa).

2 stretches are compositionally biased toward basic and acidic residues: residues 1 to 20 (MVEV…KQEN) and 31 to 41 (SDKEKVAKKGN). Residues 1–51 (MVEVSEKPNTQDDGVSKQENRNPASSSSSTSDKEKVAKKGNSDATKSSTPE) are disordered. 4 consecutive transmembrane segments (helical) span residues 93 to 113 (MIFL…LPLF), 147 to 167 (YFVY…VGFI), 219 to 239 (KVGL…IGYV), and 242 to 262 (WKLA…MGGI). An ABC transmembrane type-1 1 domain is found at 97–387 (AIVSLASIAA…VAPNTQAFAS (291 aa)). An N-linked (GlcNAc...) asparagine glycan is attached at asparagine 293. Helical transmembrane passes span 325–345 (LGIM…LGFW) and 358–378 (LSAI…IGNV). One can recognise an ABC transporter 1 domain in the interval 422 to 667 (IEFRGIKHIY…KGTYLQLVEA (246 aa)). 457–464 (GPSGSGKS) contributes to the ATP binding site. Residue asparagine 529 is glycosylated (N-linked (GlcNAc...) asparagine). The next 2 helical transmembrane spans lie at 762 to 782 (LCGF…SVFF) and 810 to 830 (FLML…IFAI). The ABC transmembrane type-1 2 domain maps to 764–1051 (GFFFAVLSGA…VFSFSPDMGK (288 aa)). A glycan (N-linked (GlcNAc...) asparagine) is linked at asparagine 860. The next 4 helical transmembrane spans lie at 884 to 904 (LGTI…ALAF), 910 to 930 (LVCI…FWIL), 995 to 1015 (ASQS…GGLL), and 1025 to 1045 (FFLC…VFSF). In terms of domain architecture, ABC transporter 2 spans 1086–1324 (IEFRDVHFRY…KGRYYELVHM (239 aa)). An N-linked (GlcNAc...) asparagine glycan is attached at asparagine 1108. Position 1121–1128 (1121–1128 (GPSGCGKS)) interacts with ATP.

The protein belongs to the ABC transporter superfamily. ABCB family. Multidrug resistance exporter (TC 3.A.1.201) subfamily.

The protein localises to the cell membrane. It carries out the reaction itraconazole(in) + ATP + H2O = itraconazole(out) + ADP + phosphate + H(+). In terms of biological role, pleiotropic ABC efflux transporter that may be involved in the modulation susceptibility to a wide range of unrelated cytotoxic compounds, including terbinafine, 4-nitroquinoline N-oxide, and ethidium bromide. May play a role in pathogenicity. In Trichophyton interdigitale (strain MR816), this protein is ABC multidrug transporter MDR2.